Here is a 336-residue protein sequence, read N- to C-terminus: tRNA N6-adenosine threonylcarbamoyltransferase (336 aa).

Fe cation is bound by residues His112 and His116. Residues 136 to 140 (LVSGG), Asp169, Gly182, and Asn276 each bind substrate. Asp304 lines the Fe cation pocket.

Belongs to the KAE1 / TsaD family. It depends on Fe(2+) as a cofactor.

It is found in the cytoplasm. It carries out the reaction L-threonylcarbamoyladenylate + adenosine(37) in tRNA = N(6)-L-threonylcarbamoyladenosine(37) in tRNA + AMP + H(+). Required for the formation of a threonylcarbamoyl group on adenosine at position 37 (t(6)A37) in tRNAs that read codons beginning with adenine. Is involved in the transfer of the threonylcarbamoyl moiety of threonylcarbamoyl-AMP (TC-AMP) to the N6 group of A37, together with TsaE and TsaB. TsaD likely plays a direct catalytic role in this reaction. The polypeptide is tRNA N6-adenosine threonylcarbamoyltransferase (Francisella tularensis subsp. tularensis (strain FSC 198)).